The sequence spans 169 residues: Aspartic protease inhibitor 6 (169 aa).

N1 carries an N-linked (GlcNAc...) asparagine glycan. 2 cysteine pairs are disulfide-bonded: C30/C75 and C124/C134.

Belongs to the protease inhibitor I3 (leguminous Kunitz-type inhibitor) family.

It is found in the vacuole. Its function is as follows. Inhibitor of cathepsin D (aspartic protease). May also inhibit trypsin and chymotrypsin (serine proteases). Protects the plant by inhibiting proteases of invading organisms. The polypeptide is Aspartic protease inhibitor 6 (Solanum tuberosum (Potato)).